A 4646-amino-acid chain; its full sequence is Cytoplasmic dynein 1 heavy chain 1 (4646 aa).

Position 2 is an N-acetylserine (serine 2). The interval 53–1867 is stem; that stretch reads EAALEEKSAL…SIQMANAKFN (1815 aa). Position 70 is a phosphoserine (serine 70). 3 coiled-coil regions span residues 181–202, 455–478, and 543–566; these read SVEK…NIEI, AHRK…QLRA, and TEAW…RITA. The interval 448 to 703 is interaction with DYNC1I2; sequence MVWRINPAHR…NTQEIFDDWA (256 aa). The segment at 651-802 is interaction with DYNC1LI2; the sequence is AKQIDRQLTA…EKVEERNTIS (152 aa). The residue at position 1125 (lysine 1125) is an N6-acetyllysine. Coiled-coil stretches lie at residues 1171–1252 and 1357–1373; these read TYVQ…AVES and RKLR…LKSF. Position 1230 is a phosphoserine (serine 1230). AAA stretches follow at residues 1868–2099, 2180–2452, 2556–2805, and 2899–3168; these read YGFE…VLVS, EELK…LTRL, EVET…WVRG, and VFYE…GGRT. ATP contacts are provided by residues 1906-1913 and 2224-2231; these read GPAGTGKT and GPSGSGKS. Positions 2390-2411 are disordered; that stretch reads GEDEAQRRRKGKEDEGEEAASP. ATP-binding positions include 2595–2602 and 2937–2944; these read GPPGSGKT and GVSGAGKT. Coiled-coil stretches lie at residues 3189-3275, 3396-3500, and 3737-3800; these read EKRS…ADKQ, AIAQ…KNQM, and EFQL…VSQQ. The tract at residues 3189–3500 is stalk; it reads EKRSELEEQQ…KTSETFKNQM (312 aa). Residue lysine 3480 is modified to N6-acetyllysine. 2 AAA regions span residues 3553-3782 and 4005-4221; these read LSNA…EVTR and AHMF…TVDT. The residue at position 4162 (serine 4162) is a Phosphoserine. Lysine 4283 bears the N6-acetyllysine mark. At threonine 4366 the chain carries Phosphothreonine. Serine 4368 carries the phosphoserine modification.

This sequence belongs to the dynein heavy chain family. Homodimer. The cytoplasmic dynein 1 complex consists of two catalytic heavy chains (HCs) and a number of non-catalytic subunits presented by intermediate chains (ICs), light intermediate chains (LICs) and light chains (LCs); the composition seems to vary in respect to the IC, LIC and LC composition. The heavy chain homodimer serves as a scaffold for the probable homodimeric assembly of the respective non-catalytic subunits. The ICs and LICs bind directly to the HC dimer and dynein LCs assemble on the IC dimer. Interacts with DYNC1LI1; DYNC1LI1 and DYNC1LI2 bind mutually exclusive to DYNC1H1. Interacts with DYNC1LI2; DYNC1LI1 and DYNC1LI2 bind mutually exclusive to DYNC1H1. Interacts with DYNC1I2. Interacts with BICD2. Interacts with isoform 2 of CRACR2A. Interacts with DNALI1.

The protein resides in the cytoplasm. The protein localises to the cytoskeleton. Its function is as follows. Cytoplasmic dynein 1 acts as a motor for the intracellular retrograde motility of vesicles and organelles along microtubules. Dynein has ATPase activity; the force-producing power stroke is thought to occur on release of ADP. Plays a role in mitotic spindle assembly and metaphase plate congression. The protein is Cytoplasmic dynein 1 heavy chain 1 of Homo sapiens (Human).